A 298-amino-acid chain; its full sequence is Inosose dehydratase (298 aa).

This sequence belongs to the IolE/MocC family. It depends on glutathione as a cofactor. Co(2+) is required as a cofactor. Mn(2+) serves as cofactor.

The enzyme catalyses scyllo-inosose = 3D-3,5/4-trihydroxycyclohexane-1,2-dione + H2O. The protein operates within polyol metabolism; myo-inositol degradation into acetyl-CoA; acetyl-CoA from myo-inositol: step 2/7. Functionally, catalyzes the dehydration of inosose (2-keto-myo-inositol, 2KMI or 2,4,6/3,5-pentahydroxycyclohexanone) to 3D-(3,5/4)-trihydroxycyclohexane-1,2-dione (D-2,3-diketo-4-deoxy-epi-inositol). This chain is Inosose dehydratase, found in Geobacillus thermodenitrificans (strain NG80-2).